Consider the following 197-residue polypeptide: Thymidine kinase (197 aa).

ATP contacts are provided by residues 9 to 16 (SAMDAGKT) and 87 to 90 (DEIH). Glutamate 88 functions as the Proton acceptor in the catalytic mechanism. Positions 145, 147, 187, and 190 each coordinate Zn(2+).

The protein belongs to the thymidine kinase family. In terms of assembly, homotetramer.

The protein localises to the cytoplasm. The enzyme catalyses thymidine + ATP = dTMP + ADP + H(+). The polypeptide is Thymidine kinase (Francisella tularensis subsp. tularensis (strain SCHU S4 / Schu 4)).